We begin with the raw amino-acid sequence, 217 residues long: Adapter protein MecA (217 aa).

This sequence belongs to the MecA family. In terms of assembly, homodimer.

Its function is as follows. Enables the recognition and targeting of unfolded and aggregated proteins to the ClpC protease or to other proteins involved in proteolysis. Acts negatively in the development of competence by binding ComK and recruiting it to the ClpCP protease. When overexpressed, inhibits sporulation. Also involved in Spx degradation by ClpC. The protein is Adapter protein MecA of Alkalihalophilus pseudofirmus (strain ATCC BAA-2126 / JCM 17055 / OF4) (Bacillus pseudofirmus).